Here is a 122-residue protein sequence, read N- to C-terminus: Large ribosomal subunit protein uL14 (122 aa).

This sequence belongs to the universal ribosomal protein uL14 family. Part of the 50S ribosomal subunit. Forms a cluster with proteins L3 and L19. In the 70S ribosome, L14 and L19 interact and together make contacts with the 16S rRNA in bridges B5 and B8.

Its function is as follows. Binds to 23S rRNA. Forms part of two intersubunit bridges in the 70S ribosome. The sequence is that of Large ribosomal subunit protein uL14 from Anaeromyxobacter dehalogenans (strain 2CP-1 / ATCC BAA-258).